A 195-amino-acid polypeptide reads, in one-letter code: Thymidine kinase (195 aa).

ATP is bound by residues 8-15 (GLMGSGKS) and 86-89 (DESQ). The active-site Proton acceptor is the Glu87. The Zn(2+) site is built by Cys146, Cys151, Cys184, and His187.

Belongs to the thymidine kinase family. Homotetramer.

Its subcellular location is the cytoplasm. It catalyses the reaction thymidine + ATP = dTMP + ADP + H(+). The chain is Thymidine kinase (tdk) from Bacillus subtilis subsp. natto.